An 88-amino-acid chain; its full sequence is YcgL domain-containing protein CGSHiGG_01115 (88 aa).

Residues Met-1 to Ser-85 form the YcgL domain.

This Haemophilus influenzae (strain PittGG) protein is YcgL domain-containing protein CGSHiGG_01115.